A 494-amino-acid chain; its full sequence is MFEIKKICCIGAGYVGGPTCSVIAHMRPEIRVTVVDVNESRINAWNSPTLPIYEPGLKEVVESCRGKNLFFSTNIDDAIKEADLVFISVNTPTKTYGMGKGRAADLKYIEACARRIVQNSNGYKIVTEKSTVPVRAAESIRRIFDANTKPNLNLQVLSNPEFLAEGTAIKDLKNPDRVLIGGDETPEGQRAVQALCAVYEHWVPREKILTTNTWSSELSKLAANAFLAQRISSINSISALCEATGADVEEVATAIGMDQRIGNKFLKASVGFGGSCFQKDVLNLVYLCEALNLPEVARYWQQVIDMNDYQRRRFASRIIDSLFNTVTDKKIAILGFAFKKDTGDTRESSSIYISKYLMDEGAHLHIYDPKVPREQIVVDLSHPGVSEDDQVSRLVTISKDPYEACDGAHAVVICTEWDMFKELDYERIHKKMLKPAFIFDGRRVLDGLHNELQTIGFQIETIGKKVSSKRIPYAPSGEIPKFSLQDPPNKKPKV.

Residues 11–16 (GAGYVG), D36, R41, and 89–93 (VNTPT) contribute to the NAD(+) site. Positions 88–110 (SVNTPTKTYGMGKGRAADLKYIE) are disordered. The residue at position 107 (K107) is an N6-acetyllysine. Residues 129–135 (KSTVPVR) form an allosteric switch region region. Residue 130-132 (STV) coordinates NAD(+). E161 (proton donor/acceptor) is an active-site residue. Substrate contacts are provided by residues 161–165 (EFLAE), 220–224 (KLAAN), R260, and 267–273 (KASVGFG). E165 lines the NAD(+) pocket. K220 functions as the Proton donor/acceptor in the catalytic mechanism. The Nucleophile role is filled by C276. Position 276–279 (276–279 (CFQK)) interacts with NAD(+). The segment at 321–325 (SLFNT) is important for formation of active hexamer structure. 338–339 (FK) is a substrate binding site. R346 is an NAD(+) binding site. Position 442 (R442) interacts with substrate. The disordered stretch occupies residues 466-494 (VSSKRIPYAPSGEIPKFSLQDPPNKKPKV). S476 is modified (phosphoserine).

It belongs to the UDP-glucose/GDP-mannose dehydrogenase family. In terms of assembly, homohexamer.

The enzyme catalyses UDP-alpha-D-glucose + 2 NAD(+) + H2O = UDP-alpha-D-glucuronate + 2 NADH + 3 H(+). The protein operates within nucleotide-sugar biosynthesis; UDP-alpha-D-glucuronate biosynthesis; UDP-alpha-D-glucuronate from UDP-alpha-D-glucose: step 1/1. UDP-alpha-D-xylose (UDX) acts as a feedback inhibitor. It binds at the same site as the substrate, but functions as allosteric inhibitor by triggering a conformation change that disrupts the active hexameric ring structure and gives rise to an inactive, horseshoe-shaped hexamer. In terms of biological role, catalyzes the formation of UDP-alpha-D-glucuronate, a constituent of complex glycosaminoglycans. Required for the biosynthesis of chondroitin sulfate and heparan sulfate. Required for embryonic development via its role in the biosynthesis of glycosaminoglycans. Required for proper brain and neuronal development. The polypeptide is UDP-glucose 6-dehydrogenase (UGDH) (Pongo abelii (Sumatran orangutan)).